A 628-amino-acid polypeptide reads, in one-letter code: ATP-dependent zinc metalloprotease FtsH (628 aa).

The Stromal segment spans residues methionine 1–threonine 7. Residues leucine 8–glycine 28 traverse the membrane as a helical segment. Residues proline 29–valine 118 lie on the Lumenal side of the membrane. A helical transmembrane segment spans residues tryptophan 119–phenylalanine 139. Residues arginine 140–phenylalanine 628 lie on the Stromal side of the membrane. Glycine 213 to threonine 220 is an ATP binding site. Zn(2+) is bound at residue histidine 434. Residue glutamate 435 is part of the active site. Histidine 438 and aspartate 512 together coordinate Zn(2+).

It in the central section; belongs to the AAA ATPase family. The protein in the C-terminal section; belongs to the peptidase M41 family. As to quaternary structure, homohexamer. Requires Zn(2+) as cofactor.

Its subcellular location is the plastid. It localises to the chloroplast thylakoid membrane. Acts as a processive, ATP-dependent zinc metallopeptidase. The sequence is that of ATP-dependent zinc metalloprotease FtsH from Pyropia yezoensis (Susabi-nori).